The primary structure comprises 875 residues: Alanine--tRNA ligase (875 aa).

Residues histidine 564, histidine 568, cysteine 666, and histidine 670 each contribute to the Zn(2+) site.

The protein belongs to the class-II aminoacyl-tRNA synthetase family. In terms of assembly, homotetramer. Zn(2+) serves as cofactor.

The protein resides in the cytoplasm. The catalysed reaction is tRNA(Ala) + L-alanine + ATP = L-alanyl-tRNA(Ala) + AMP + diphosphate. Catalyzes the attachment of alanine to tRNA(Ala) in a two-step reaction: alanine is first activated by ATP to form Ala-AMP and then transferred to the acceptor end of tRNA(Ala). Also edits incorrectly charged Ser-tRNA(Ala) and Gly-tRNA(Ala) via its editing domain. The chain is Alanine--tRNA ligase from Yersinia pseudotuberculosis serotype IB (strain PB1/+).